The following is a 214-amino-acid chain: Pyrrolidone-carboxylate peptidase (214 aa).

Active-site residues include glutamate 80, cysteine 143, and histidine 166.

This sequence belongs to the peptidase C15 family. Homotetramer.

It localises to the cytoplasm. It catalyses the reaction Release of an N-terminal pyroglutamyl group from a polypeptide, the second amino acid generally not being Pro.. In terms of biological role, removes 5-oxoproline from various penultimate amino acid residues except L-proline. In Enterobacter sp. (strain 638), this protein is Pyrrolidone-carboxylate peptidase.